Reading from the N-terminus, the 353-residue chain is F-box protein At2g14290 (353 aa).

The region spanning 6–58 is the F-box domain; the sequence is PRTWSELPPDLLGSIFHRLSFTDFHRAKIVCWNWNLSSKLTVPKKIRSPWLML.

This Arabidopsis thaliana (Mouse-ear cress) protein is F-box protein At2g14290.